The primary structure comprises 327 residues: MEGIKGSEVNVPDAVFAWLLDGKGGARHLEDNDVIDSEHPCWLHLNYTHPDSAQWLASTPLLPNNVRDALAGDSVRPRVSRLGDGTLITLRCINGSTDERPDQLVAMRLYMDERLIVSTRQRKVLALDDVVNDLKEGTGPADCGGWLVDVCDALTDHASEFIEELHDKIIDLEDNLLDQHIPPRGSLALLRKQLIVMRRYMTPQRDVYARLASERLSWMTDDQRRRMQDIADRLGRGLDEIDSCIARTAVMSDEIAQVMQESLSRRTYTMSLMAMVFLPSTFLTGLFGVNLGGIPGGGYQFGFSAFCIMLVVLIGGVAWWLHRSKWL.

Over 1–273 (MEGIKGSEVN…SRRTYTMSLM (273 aa)) the chain is Cytoplasmic. The chain crosses the membrane as a helical span at residues 274 to 294 (AMVFLPSTFLTGLFGVNLGGI). Over 295 to 300 (PGGGYQ) the chain is Periplasmic. Residues 301 to 321 (FGFSAFCIMLVVLIGGVAWWL) traverse the membrane as a helical segment. Over 322-327 (HRSKWL) the chain is Cytoplasmic.

This sequence belongs to the CorA metal ion transporter (MIT) (TC 1.A.35) family.

It is found in the cell inner membrane. The enzyme catalyses Zn(2+)(out) + H(+)(out) = Zn(2+)(in) + H(+)(in). Zinc transporter. Acts as a Zn(2+):proton symporter, which likely mediates zinc ion uptake. The protein is Zinc transport protein ZntB of Enterobacter sp. (strain 638).